We begin with the raw amino-acid sequence, 651 residues long: Methionine--tRNA ligase (651 aa).

A 'HIGH' region motif is present at residues 10-20 (AYTNGPLHLGH). Cys-142, Cys-145, Cys-154, and Cys-157 together coordinate Zn(2+). A 'KMSKS' region motif is present at residues 320-324 (KMSTS). Residue Thr-323 coordinates ATP. In terms of domain architecture, tRNA-binding spans 550 to 651 (YLEKIDLRVG…KDIKAGSKVR (102 aa)).

This sequence belongs to the class-I aminoacyl-tRNA synthetase family. MetG type 1 subfamily. In terms of assembly, homodimer. The cofactor is Zn(2+).

It is found in the cytoplasm. The catalysed reaction is tRNA(Met) + L-methionine + ATP = L-methionyl-tRNA(Met) + AMP + diphosphate. In terms of biological role, is required not only for elongation of protein synthesis but also for the initiation of all mRNA translation through initiator tRNA(fMet) aminoacylation. This Methanocaldococcus jannaschii (strain ATCC 43067 / DSM 2661 / JAL-1 / JCM 10045 / NBRC 100440) (Methanococcus jannaschii) protein is Methionine--tRNA ligase.